The sequence spans 209 residues: Thymidylate kinase (209 aa).

10–17 is a binding site for ATP; the sequence is GIDGCGKS.

The protein belongs to the thymidylate kinase family.

It carries out the reaction dTMP + ATP = dTDP + ADP. Phosphorylation of dTMP to form dTDP in both de novo and salvage pathways of dTTP synthesis. The sequence is that of Thymidylate kinase from Parasynechococcus marenigrum (strain WH8102).